Consider the following 216-residue polypeptide: Uridine kinase (216 aa).

Position 16–23 (16–23 (GASASGKS)) interacts with ATP.

This sequence belongs to the uridine kinase family.

It localises to the cytoplasm. The enzyme catalyses uridine + ATP = UMP + ADP + H(+). The catalysed reaction is cytidine + ATP = CMP + ADP + H(+). It participates in pyrimidine metabolism; CTP biosynthesis via salvage pathway; CTP from cytidine: step 1/3. Its pathway is pyrimidine metabolism; UMP biosynthesis via salvage pathway; UMP from uridine: step 1/1. In Mannheimia succiniciproducens (strain KCTC 0769BP / MBEL55E), this protein is Uridine kinase.